A 767-amino-acid chain; its full sequence is MTDPTKRRMIGSTVPAKVREYYNQGHQCLLQEDWEMSVLFFSRALHLDPKLVDFYVFRAEAFIQLCDFSSALQNLRRAYSYDPGNNKYLNRLAFVLYLQGQCLYELCDFQEALCVFLQASDLQPQNASFSYRCMACLLALKRYHDCLALITREVKQGRASADVYILRARLYNFFQKAKLCYQDLRSALLLDPLHAQAKGLLQKMVDQAKQSLQDASTLAVQGKVHRALKCINCAIENNPLDPNFFFFRGTLRRRLQQFDHAVEDFLKAMDMVTDTQDNLVKQAQRQLLLTYNDFAVHCYNHGAYQEGVLLLNKAIRDEQNEKGLYINRGDCFFQLGNLAFAEADYKQALALSPLDEGANLRMGVLQEKLGFCQQKHRQFQTAEEHFSEAIRHSPQKPQYYLHRAKCRQFLQNTLGARLDVATVLLVNPEYPKMAAVMNTLFPSMTVENVLKSQVAELAKLQLSRMIENGPKNIYPQSTVVQRLLERRKAQVLVKLWKQERLGTPEEEVTLYQAPQLAEEKKVKTARRRTSLTDSYADQTSSGSVFSIVSISTSGPEMSTSQEYKSSSHTAIEFSESTLLKPQLSVPRKSQELTWSPKVVQAVTENLIQNATEVTPAYGQRDSKKATQVPKPKKTEDPKDPSQSTSTTEAPEGPRPSKSRSTLSVKERIRRAKAVRAQGWKLKAQRSSQKVTKTPSLTHSTTHSDIGESANDTPGQTPWPSKAADSLSFSEISSTDLSSSESFLELTNLLTQEVQQIPGDREKLTSDD.

9 TPR repeats span residues 18–51 (VREYYNQGHQCLLQEDWEMSVLFFSRALHLDPKL), 53–85 (DFYVFRAEAFIQLCDFSSALQNLRRAYSYDPGN), 93–126 (AFVLYLQGQCLYELCDFQEALCVFLQASDLQPQN), 128–155 (SFSYRCMACLLALKRYHDCLALITREVK), 208–241 (AKQSLQDASTLAVQGKVHRALKCINCAIENNPLD), 242–275 (PNFFFFRGTLRRRLQQFDHAVEDFLKAMDMVTDT), 288–321 (LLTYNDFAVHCYNHGAYQEGVLLLNKAIRDEQNE), 322–355 (KGLYINRGDCFFQLGNLAFAEADYKQALALSPLD), and 363–396 (GVLQEKLGFCQQKHRQFQTAEEHFSEAIRHSPQK). The segment at 612–733 (EVTPAYGQRD…DSLSFSEISS (122 aa)) is disordered. Residues 684-718 (QRSSQKVTKTPSLTHSTTHSDIGESANDTPGQTPW) show a composition bias toward polar residues.

In Mus musculus (Mouse), this protein is Tetratricopeptide repeat protein 16 (Ttc16).